The chain runs to 426 residues: Neuromedin-U receptor 1 (426 aa).

Topologically, residues 1–65 are extracellular; that stretch reads MTPLCLNCSV…QTELFMPICA (65 aa). N7, N27, and N41 each carry an N-linked (GlcNAc...) asparagine glycan. A helical membrane pass occupies residues 66–86; it reads TYLLIFVVGAVGNGLTCLVIL. Over 87 to 97 the chain is Cytoplasmic; sequence RHKAMRTPTNY. Residues 98–118 traverse the membrane as a helical segment; sequence YLFSLAVSDLLVLLVGLPLEL. Residues 119–138 lie on the Extracellular side of the membrane; it reads YEMWHNYPFLLGVGGCYFRT. Cysteines 134 and 219 form a disulfide. Residues 139–161 traverse the membrane as a helical segment; it reads LLFEMVCLASVLNVTALSVERYV. Residues 162–181 are Cytoplasmic-facing; it reads AVVHPLQARSMVTRAHVRRV. Residues 182–202 form a helical membrane-spanning segment; the sequence is LGAVWGLAMLCSLPNTSLHGI. Residues 203 to 235 lie on the Extracellular side of the membrane; that stretch reads RQLHVPCRGPVPDSAVCMLVRPRALYNMVVQTT. The helical transmembrane segment at 236–256 threads the bilayer; that stretch reads ALLFFCLPMAIMSVLYLLIGL. Residues 257-294 are Cytoplasmic-facing; sequence RLRRERLLLMQEAKGRGSAAARSRYTCRLQQHDRGRRQ. Residues 295 to 315 traverse the membrane as a helical segment; the sequence is VTKMLFVLVVVFGICWAPFHA. Residues 316 to 338 lie on the Extracellular side of the membrane; sequence DRVMWSVVSQWTDGLHLAFQHVH. The helical transmembrane segment at 339–359 threads the bilayer; the sequence is VISGIFFYLGSAANPVLYSLM. At 360–426 the chain is on the cytoplasmic side; the sequence is SSRFRETFQE…PEAQQETDPS (67 aa).

The protein belongs to the G-protein coupled receptor 1 family. Expressed in greatest abundance in peripheral organs, particularly in elements of the gastrointestinal and urogenital systems with highest levels in testes. In central nervous system structures express levels are much lower than those seen in peripheral organs. Within the CNS, has been detected in highest abundance in the cerebellum, dorsal root ganglia, hippocampus, and spinal cord.

It localises to the cell membrane. Functionally, receptor for the neuromedin-U and neuromedin-S neuropeptides. The chain is Neuromedin-U receptor 1 (NMUR1) from Homo sapiens (Human).